A 249-amino-acid chain; its full sequence is Probable transcriptional regulatory protein Sare_1779 (249 aa).

Belongs to the TACO1 family.

It is found in the cytoplasm. The chain is Probable transcriptional regulatory protein Sare_1779 from Salinispora arenicola (strain CNS-205).